Here is a 574-residue protein sequence, read N- to C-terminus: Isocitrate dehydrogenase kinase/phosphatase (574 aa).

Residues 315–321 (APGIRGM) and Lys-336 each bind ATP. The active site involves Asp-371.

This sequence belongs to the AceK family.

It is found in the cytoplasm. The catalysed reaction is L-seryl-[isocitrate dehydrogenase] + ATP = O-phospho-L-seryl-[isocitrate dehydrogenase] + ADP + H(+). In terms of biological role, bifunctional enzyme which can phosphorylate or dephosphorylate isocitrate dehydrogenase (IDH) on a specific serine residue. This is a regulatory mechanism which enables bacteria to bypass the Krebs cycle via the glyoxylate shunt in response to the source of carbon. When bacteria are grown on glucose, IDH is fully active and unphosphorylated, but when grown on acetate or ethanol, the activity of IDH declines drastically concomitant with its phosphorylation. This is Isocitrate dehydrogenase kinase/phosphatase from Escherichia coli O81 (strain ED1a).